Here is a 335-residue protein sequence, read N- to C-terminus: MIRDEISVSIQTLRWKCIESRAYSKRLHYGRFALSPLHKGRADTIGIAMRRALLGEVEGTCITRVKLENIKHEYSAIIGIEESVHDILMNLKEIVFRSDSYGIREASIYIVGPRNVTAQDIILPPSVKIIDTTQHIARLTKSITSDIRLQIEKNRGYIIHSPNNYQDGIFPIDAVFMPVRDANYSIHSYGSGNEIREVLFLEIWTNGGLTPREALYEASRNLIDLFIPFLHGEEQNIDGMNNKKGSNMLPFPLSHVLTDTGETKEKIAFQLIFIDQLELPPKTYNSLRRANIHTLLDLLNYSREDLMRIEHFGKESVEQVLEVLQKLFAIDPPRN.

The alpha N-terminal domain (alpha-NTD) stretch occupies residues 1-233; it reads MIRDEISVSI…DLFIPFLHGE (233 aa). An alpha C-terminal domain (alpha-CTD) region spans residues 264-335; that stretch reads KEKIAFQLIF…KLFAIDPPRN (72 aa).

It belongs to the RNA polymerase alpha chain family. In plastids the minimal PEP RNA polymerase catalytic core is composed of four subunits: alpha, beta, beta', and beta''. When a (nuclear-encoded) sigma factor is associated with the core the holoenzyme is formed, which can initiate transcription.

Its subcellular location is the plastid. It is found in the chloroplast. It carries out the reaction RNA(n) + a ribonucleoside 5'-triphosphate = RNA(n+1) + diphosphate. Its function is as follows. DNA-dependent RNA polymerase catalyzes the transcription of DNA into RNA using the four ribonucleoside triphosphates as substrates. The polypeptide is DNA-directed RNA polymerase subunit alpha (Pinus thunbergii (Japanese black pine)).